The following is a 269-amino-acid chain: Tryptophan synthase alpha chain (269 aa).

Active-site proton acceptor residues include Glu56 and Asp67.

Belongs to the TrpA family. As to quaternary structure, tetramer of two alpha and two beta chains.

The catalysed reaction is (1S,2R)-1-C-(indol-3-yl)glycerol 3-phosphate + L-serine = D-glyceraldehyde 3-phosphate + L-tryptophan + H2O. It functions in the pathway amino-acid biosynthesis; L-tryptophan biosynthesis; L-tryptophan from chorismate: step 5/5. Its function is as follows. The alpha subunit is responsible for the aldol cleavage of indoleglycerol phosphate to indole and glyceraldehyde 3-phosphate. The sequence is that of Tryptophan synthase alpha chain from Mycobacterium marinum (strain ATCC BAA-535 / M).